The sequence spans 373 residues: 3 beta-hydroxysteroid dehydrogenase/Delta 5--&gt;4-isomerase (373 aa).

Catalysis depends on Tyr155, which acts as the Proton acceptor. Lys159 contacts NAD(+). Residues 288-308 form a helical membrane-spanning segment; the sequence is IFLKYWLAFLLEIVSFLLSPI.

This sequence belongs to the 3-beta-HSD family.

Its subcellular location is the endoplasmic reticulum membrane. The protein resides in the mitochondrion membrane. It catalyses the reaction a 3beta-hydroxy-Delta(5)-steroid + NAD(+) = a 3-oxo-Delta(5)-steroid + NADH + H(+). It carries out the reaction a 3-oxo-Delta(5)-steroid = a 3-oxo-Delta(4)-steroid. It functions in the pathway lipid metabolism; steroid biosynthesis. Functionally, 3-beta-HSD is a bifunctional enzyme, that catalyzes the oxidative conversion of Delta(5)-ene-3-beta-hydroxy steroid, and the oxidative conversion of ketosteroids. The 3-beta-HSD enzymatic system plays a crucial role in the biosynthesis of all classes of hormonal steroids. The protein is 3 beta-hydroxysteroid dehydrogenase/Delta 5--&gt;4-isomerase (HSD3B) of Equus caballus (Horse).